Consider the following 586-residue polypeptide: MVEHGGTDSMWLNKYNPAAASSASSSSSSDAENKLFSRLKVSLTKKYPQKNAELLSAQYGTNLLLLGVSVMLALAAQSGPVKEEHLLSFITVLMLVQLVWMLCYMIRRERERSPVPERDAHAGASWIRGGLTMLALLSLIMDAFRIGYFVGYHSCISAALGVYPIVHALHTISQVHFLWFHIKDVIKKYETFERFGVIHAVFTNLLLWCNGVMSETEHFMHNHRRRLIEMGYANLSTVDVQPHCNCTTSVCSMFSTSLYYLYPFNIEYHIFVSAMLFVMWKNIGRTLDRHSNRKRRSTGSTGLLLGPLGGLVALASSVSVLVVYLIHLEKTEEMHEAAVSMFYYYGVAMMACMCVGSGTGLLVYRMENRPMDTGSNPARTLDTELLLASSLGSWLMSWCSVVASVAEAGQKSPSFSWTSLTYSLLLVLEKCIQNLFIVESLYRRHSEEEEDAAAPQVFSVAVPPYDGILNHGYEAHDKHREAEPAAGSHALSRKQPDAPLPAGQRLDVTPGRKRQILKNICMFLFMCNISLWILPAFGCRPQYDNPLENETFGTSVWTTVLNVAIPLNLFYRMHSVASLFEVFRKV.

Topologically, residues 1–52 (MVEHGGTDSMWLNKYNPAAASSASSSSSSDAENKLFSRLKVSLTKKYPQKNA) are cytoplasmic. A helical membrane pass occupies residues 53–74 (ELLSAQYGTNLLLLGVSVMLAL). At 75–82 (AAQSGPVK) the chain is on the extracellular side. The helical transmembrane segment at 83-106 (EEHLLSFITVLMLVQLVWMLCYMI) threads the bilayer. Over 107–124 (RRERERSPVPERDAHAGA) the chain is Cytoplasmic. The chain crosses the membrane as a helical span at residues 125–147 (SWIRGGLTMLALLSLIMDAFRIG). Residues 148-157 (YFVGYHSCIS) lie on the Extracellular side of the membrane. The chain crosses the membrane as a helical span at residues 158–182 (AALGVYPIVHALHTISQVHFLWFHI). The Cytoplasmic segment spans residues 183–190 (KDVIKKYE). Residues 191-217 (TFERFGVIHAVFTNLLLWCNGVMSETE) traverse the membrane as a helical segment. Over 218-255 (HFMHNHRRRLIEMGYANLSTVDVQPHCNCTTSVCSMFS) the chain is Extracellular. The chain crosses the membrane as a helical span at residues 256–281 (TSLYYLYPFNIEYHIFVSAMLFVMWK). At 282 to 303 (NIGRTLDRHSNRKRRSTGSTGL) the chain is on the cytoplasmic side. The helical transmembrane segment at 304–326 (LLGPLGGLVALASSVSVLVVYLI) threads the bilayer. Over 327-336 (HLEKTEEMHE) the chain is Extracellular. The chain crosses the membrane as a helical span at residues 337–362 (AAVSMFYYYGVAMMACMCVGSGTGLL). Residues 363–380 (VYRMENRPMDTGSNPART) are Cytoplasmic-facing. A helical transmembrane segment spans residues 381–405 (LDTELLLASSLGSWLMSWCSVVASV). The Extracellular segment spans residues 406 to 417 (AEAGQKSPSFSW). The chain crosses the membrane as a helical span at residues 418-438 (TSLTYSLLLVLEKCIQNLFIV). Topologically, residues 439 to 518 (ESLYRRHSEE…TPGRKRQILK (80 aa)) are cytoplasmic. The disordered stretch occupies residues 484-505 (PAAGSHALSRKQPDAPLPAGQR). Residues 519-537 (NICMFLFMCNISLWILPAF) form a helical membrane-spanning segment. The Extracellular portion of the chain corresponds to 538-555 (GCRPQYDNPLENETFGTS). Residues 556–579 (VWTTVLNVAIPLNLFYRMHSVASL) traverse the membrane as a helical segment. The Cytoplasmic portion of the chain corresponds to 580-586 (FEVFRKV).

This sequence belongs to the otopetrin family. Homodimer.

The protein resides in the cell membrane. The protein localises to the cell projection. It localises to the microvillus. The catalysed reaction is H(+)(in) = H(+)(out). With respect to regulation, activated by both acid and alkali, with proton influx in response to extracellular acid and proton efflux during alkali stimulation. Inhibited by Zn(2+); this inhibition is thought to be pH-sensitive. Currents evoked in response to mild acid (pH 6.0) stimulus may also be mildly potentiated by exposure to Zn(2+). Activated by NH(4)Cl. Proton-selective ion channel. Biphasically modulated by acid and alkali, mediating proton influx and efflux in response to extracellular acid and base stimulation, respectively. May be involved in acid and base perception. Sensor for ammonium chloride (NH(4)Cl) in taste receptor cells. NH(4)Cl acts by increasing the intracellular pH, thereby generating a driving force for proton entry through OTOP1 channel. Plays a role in the regulation of Ca(2+) flux in response to purigenic (ATP, ADP and UDP) stimuli, leading to increase in cytosolic Ca(2+) due to influx of extracellular calcium. May play this role by inhibiting P2Y purinoceptor-mediated Ca(2+) release in a Ca(2+)-dependent manner and promote an influx of Ca(2+) in response to ATP. Through this mechanism and possibly others, plays a role in the formation and function of calcium carbonate-based structures in the vestibular system of the inner ear, called otoconia, that sense gravity and linear acceleration. In Danio rerio (Zebrafish), this protein is Proton channel OTOP1.